The chain runs to 290 residues: Shikimate dehydrogenase (NADP(+)) (290 aa).

Residues 19 to 21 and Ser65 contribute to the shikimate site; that span reads SLS. Lys69 serves as the catalytic Proton acceptor. Residues Asn90 and Asp105 each contribute to the shikimate site. NADP(+) contacts are provided by residues 129-133 and Leu231; that span reads GAGGA. Tyr233 provides a ligand contact to shikimate. Residue Gly254 participates in NADP(+) binding.

It belongs to the shikimate dehydrogenase family. In terms of assembly, homodimer.

The catalysed reaction is shikimate + NADP(+) = 3-dehydroshikimate + NADPH + H(+). The protein operates within metabolic intermediate biosynthesis; chorismate biosynthesis; chorismate from D-erythrose 4-phosphate and phosphoenolpyruvate: step 4/7. Functionally, involved in the biosynthesis of the chorismate, which leads to the biosynthesis of aromatic amino acids. Catalyzes the reversible NADPH linked reduction of 3-dehydroshikimate (DHSA) to yield shikimate (SA). The protein is Shikimate dehydrogenase (NADP(+)) of Latilactobacillus sakei subsp. sakei (strain 23K) (Lactobacillus sakei subsp. sakei).